A 426-amino-acid polypeptide reads, in one-letter code: Tryptophan synthase beta chain (426 aa).

Lys-108 bears the N6-(pyridoxal phosphate)lysine mark.

Belongs to the TrpB family. Tetramer of two alpha and two beta chains. Pyridoxal 5'-phosphate serves as cofactor.

The enzyme catalyses (1S,2R)-1-C-(indol-3-yl)glycerol 3-phosphate + L-serine = D-glyceraldehyde 3-phosphate + L-tryptophan + H2O. The protein operates within amino-acid biosynthesis; L-tryptophan biosynthesis; L-tryptophan from chorismate: step 5/5. Its function is as follows. The beta subunit is responsible for the synthesis of L-tryptophan from indole and L-serine. The chain is Tryptophan synthase beta chain (trpB) from Thermoplasma volcanium (strain ATCC 51530 / DSM 4299 / JCM 9571 / NBRC 15438 / GSS1).